The following is a 322-amino-acid chain: Protein-L-isoaspartate O-methyltransferase (322 aa).

The disordered stretch occupies residues 1 to 101; sequence MSGERAKRFP…AKQGDRSAAP (101 aa). Over residues 14-29 the composition is skewed to basic and acidic residues; that stretch reads EDLKREPRKPEGRVAE. Composition is skewed to low complexity over residues 33–51 and 76–91; these read AGDA…PAAA and HAPA…PQGG. The active site involves serine 170.

Belongs to the methyltransferase superfamily. L-isoaspartyl/D-aspartyl protein methyltransferase family.

It is found in the cytoplasm. It carries out the reaction [protein]-L-isoaspartate + S-adenosyl-L-methionine = [protein]-L-isoaspartate alpha-methyl ester + S-adenosyl-L-homocysteine. Catalyzes the methyl esterification of L-isoaspartyl residues in peptides and proteins that result from spontaneous decomposition of normal L-aspartyl and L-asparaginyl residues. It plays a role in the repair and/or degradation of damaged proteins. This is Protein-L-isoaspartate O-methyltransferase from Burkholderia pseudomallei (strain 1106a).